The sequence spans 333 residues: Protein 2 (333 aa).

Disordered stretches follow at residues 1–41 and 57–84; these read MTGR…SENA and LGAG…LPPT. Residues 24-33 show a composition bias toward polar residues; it reads QETTKQTTSA. Acidic residues predominate over residues 62 to 79; that stretch reads DYDETEADPADTYGDTEA.

In Lactuca sativa (Garden lettuce), this protein is Protein 2.